The sequence spans 487 residues: WD-40 repeat-containing protein MSI5 (487 aa).

The residue at position 1 (Met-1) is an N-acetylmethionine. Low complexity predominate over residues 1-12; that stretch reads MESEAAATVQAT. The disordered stretch occupies residues 1–44; sequence MESEAAATVQATRPRRAPRTPVTAILTDKRRRKPKSNNESQLPF. The Nuclear localization signal motif lies at 14 to 21; that stretch reads PRRAPRTP. WD repeat units lie at residues 142 to 182, 197 to 237, 270 to 310, 315 to 355, 364 to 404, and 419 to 466; these read IHPG…DRYA, GHQD…TMAG, GHKD…SPAM, AHDA…SNGV, GHRA…KKSE, and GHRD…YRPE. Residues 236–268 are disordered; sequence AGSDSKSPGSSFKQTGEGSDKTGGPSVGPRGIY. The segment covering 237 to 252 has biased composition (polar residues); it reads GSDSKSPGSSFKQTGE. Positions 288 to 303 match the DWD box motif; sequence FCSVGDDSCLMLWDAR.

This sequence belongs to the WD repeat RBAP46/RBAP48/MSI1 family. In terms of assembly, interacts with AHL16. Interacts with LHP1, PDP2, PDP3 and PDP6. Component of the PRC2 (polycomb repressive complex 2) complex which regulates histone methylation on histone H3K27.

Its subcellular location is the nucleus. Core histone-binding subunit that may target chromatin assembly factors, chromatin remodeling factors and histone deacetylases to their histone substrates in a manner that is regulated by nucleosomal DNA. Acts together with PDP1 and MSI4/FVE to regulate the function of the PRC2 complex on FLC. The chain is WD-40 repeat-containing protein MSI5 from Arabidopsis thaliana (Mouse-ear cress).